The following is a 374-amino-acid chain: 4-hydroxybenzoate polyprenyltransferase, mitochondrial (374 aa).

A mitochondrion-targeting transit peptide spans 1–63; sequence MLRLGGAGLV…RALSLSAAAV (63 aa). Residues 64-83 lie on the Mitochondrial matrix side of the membrane; that stretch reads VNSAPRPLQPYLRLMRLDKP. A helical membrane pass occupies residues 84-104; it reads IGTWLLYLPCTWSIGLAADPG. Over 105-108 the chain is Mitochondrial intermembrane; the sequence is CFPD. The helical transmembrane segment at 109–129 threads the bilayer; sequence WYMLSLFGTGAILMRGAGCTI. Residues 130-153 lie on the Mitochondrial matrix side of the membrane; that stretch reads NDMWDRDFDKKVERTANRPIAAGD. A helical transmembrane segment spans residues 154-174; the sequence is ISAFQSFVFLGAQLTLALGVL. Residues 175–176 lie on the Mitochondrial intermembrane side of the membrane; that stretch reads LH. The helical transmembrane segment at 177 to 197 threads the bilayer; sequence LNYYSIAMGAASLLLVVTYPL. Residues 198-200 are Mitochondrial matrix-facing; sequence MKR. The helical transmembrane segment at 201–221 threads the bilayer; sequence VTFWPQLALGLTFNWGALLGW. Topologically, residues 222 to 230 are mitochondrial intermembrane; the sequence is SAVKGSCDP. Residues 231-251 form a helical membrane-spanning segment; it reads AVCLPLYFSGVMWTLIYDTIY. Topologically, residues 252 to 277 are mitochondrial matrix; that stretch reads AHQDKKDDALIGLKSTALLFRENTKQ. A helical membrane pass occupies residues 278–298; sequence WLSGFGVAMVGALSLVGASSG. Residues 299–300 lie on the Mitochondrial intermembrane side of the membrane; sequence QT. A helical membrane pass occupies residues 301-321; that stretch reads LPYYAAVAAVGAHLAHQIYTV. Over 322 to 332 the chain is Mitochondrial matrix; it reads DIHRAEDCWEK. Residues 333–353 traverse the membrane as a helical segment; the sequence is FTSNRTVGLLLFLGIVLGNLY. At 354–374 the chain is on the mitochondrial intermembrane side; the sequence is KDKPDETKGVDAVGEESERTS.

The protein belongs to the UbiA prenyltransferase family. It depends on Mg(2+) as a cofactor.

It is found in the mitochondrion inner membrane. It catalyses the reaction an all-trans-polyprenyl diphosphate + 4-hydroxybenzoate = a 4-hydroxy-3-(all-trans-polyprenyl)benzoate + diphosphate. It carries out the reaction all-trans-decaprenyl diphosphate + 4-hydroxybenzoate = 4-hydroxy-3-(all-trans-decaprenyl)benzoate + diphosphate. The catalysed reaction is all-trans-nonaprenyl diphosphate + 4-hydroxybenzoate = 4-hydroxy-3-(all-trans-nonaprenyl)benzoate + diphosphate. It participates in cofactor biosynthesis; ubiquinone biosynthesis. Functionally, mediates the second step in the final reaction sequence of coenzyme Q (CoQ) biosynthesis. Catalyzes the prenylation of para-hydroxybenzoate (PHB) with an all-trans polyprenyl group (such as all-trans-nonaprenyl diphosphate). The length of the polyprenyl side chain varies depending on the species, in humans, the side chain is comprised of 10 isoprenyls producing CoQ10 (also known as ubiquinone), whereas rodents predominantly generate CoQ9. However, this specificity is not complete, human tissues have low amounts of CoQ9 and rodent organs contain some CoQ10. Plays a central role in the biosynthesis of CoQ9. CoQ9 is a vital molecule that transports electrons from mitochondrial respiratory chain complexes. CoQs also function as cofactors for uncoupling protein and plays a role as regulator of the extracellularly-induced ceramide-dependent apoptotic pathway. Regulates mitochondrial permeability transition pore (mPTP) opening and ROS production (pivotal events in cell death) in a tissue specific manner. The sequence is that of 4-hydroxybenzoate polyprenyltransferase, mitochondrial from Rattus norvegicus (Rat).